A 160-amino-acid chain; its full sequence is Glyoxalase domain-containing protein 5 (160 aa).

The 121-residue stretch at 37–157 (RLDHIVMTVK…DRNLIEVSNY (121 aa)) folds into the VOC domain.

Belongs to the glyoxalase I family.

The sequence is that of Glyoxalase domain-containing protein 5 (GLOD5) from Homo sapiens (Human).